A 298-amino-acid polypeptide reads, in one-letter code: Homoserine kinase (298 aa).

83 to 93 (PISRGLGSSSS) contributes to the ATP binding site.

It belongs to the GHMP kinase family. Homoserine kinase subfamily.

It is found in the cytoplasm. The catalysed reaction is L-homoserine + ATP = O-phospho-L-homoserine + ADP + H(+). It functions in the pathway amino-acid biosynthesis; L-threonine biosynthesis; L-threonine from L-aspartate: step 4/5. Catalyzes the ATP-dependent phosphorylation of L-homoserine to L-homoserine phosphate. In Clostridium botulinum (strain Eklund 17B / Type B), this protein is Homoserine kinase.